Here is a 180-residue protein sequence, read N- to C-terminus: Probable RNA 2'-phosphotransferase (180 aa).

Belongs to the KptA/TPT1 family.

Removes the 2'-phosphate from RNA via an intermediate in which the phosphate is ADP-ribosylated by NAD followed by a presumed transesterification to release the RNA and generate ADP-ribose 1''-2''-cyclic phosphate (APPR&gt;P). May function as an ADP-ribosylase. This chain is Probable RNA 2'-phosphotransferase, found in Pectobacterium atrosepticum (strain SCRI 1043 / ATCC BAA-672) (Erwinia carotovora subsp. atroseptica).